The following is a 1748-amino-acid chain: Flagellar attachment zone protein 1 (1748 aa).

3 coiled-coil regions span residues 613-657, 684-864, and 903-1663; these read REQE…KLQK, VTLD…HKVR, and NDHM…SALE. 41 tandem repeats follow at residues 1012–1025, 1026–1039, 1040–1053, 1054–1067, 1068–1081, 1082–1095, 1096–1109, 1110–1123, 1124–1137, 1138–1151, 1152–1165, 1166–1179, 1180–1193, 1194–1207, 1208–1221, 1222–1235, 1236–1249, 1250–1263, 1264–1277, 1278–1291, 1292–1305, 1306–1319, 1320–1333, 1334–1347, 1348–1361, 1362–1375, 1376–1389, 1390–1403, 1404–1417, 1418–1431, 1432–1445, 1446–1459, 1460–1473, 1474–1487, 1488–1501, 1502–1515, 1516–1529, 1530–1543, 1544–1557, 1558–1571, and 1572–1585. Residues 1012-1529 form a 41 X 14 AA tandem repeats of E-E-L-E-L-K-[VA]-A-E-N-E-K-L-A region; it reads EELELKAAEN…LKAAENEKLA (518 aa).

It localises to the cell projection. Its subcellular location is the cilium. The protein resides in the flagellum. A component of FAZ filament that is required for correct FAZ assembly and attachment. Not essential for new flagellum growth. This is Flagellar attachment zone protein 1 from Trypanosoma brucei gambiense (strain MHOM/CI/86/DAL972).